The following is a 282-amino-acid chain: Orotidine 5'-phosphate decarboxylase (282 aa).

K95 (proton donor) is an active-site residue.

Belongs to the OMP decarboxylase family. Type 2 subfamily.

It carries out the reaction orotidine 5'-phosphate + H(+) = UMP + CO2. The protein operates within pyrimidine metabolism; UMP biosynthesis via de novo pathway; UMP from orotate: step 2/2. This Mycobacterium leprae (strain TN) protein is Orotidine 5'-phosphate decarboxylase (pyrF).